The sequence spans 527 residues: Flavonoid 3',5'-hydroxylase CYP75B138 (527 aa).

Residues L6–F26 traverse the membrane as a helical segment. A heme-binding site is contributed by C459.

It belongs to the cytochrome P450 family. Requires heme as cofactor. As to expression, expressed in young cromes.

It localises to the membrane. It catalyses the reaction a 3',5'-unsubstituted flavanone + 2 reduced [NADPH--hemoprotein reductase] + 2 O2 = a 3',5'-dihydroxyflavanone + 2 oxidized [NADPH--hemoprotein reductase] + 2 H2O + 2 H(+). The catalysed reaction is (2S)-naringenin + 2 reduced [NADPH--hemoprotein reductase] + 2 O2 = (2S)-dihydrotricetin + 2 oxidized [NADPH--hemoprotein reductase] + 2 H2O + 2 H(+). The enzyme catalyses (2R,3R)-dihydrokaempferol + 2 reduced [NADPH--hemoprotein reductase] + 2 O2 = (2R,3R)-dihydromyricetin + 2 oxidized [NADPH--hemoprotein reductase] + 2 H2O + 2 H(+). It carries out the reaction kaempferol + 2 reduced [NADPH--hemoprotein reductase] + 2 O2 = myricetin + 2 oxidized [NADPH--hemoprotein reductase] + 2 H2O + 2 H(+). It functions in the pathway flavonoid metabolism. In terms of biological role, flavonoid 3',5'-hydroxylase that catalyzes the 3'- and 5'-hydroxylation of flavanones, dihydroflavonols and flavonols. Converts narigenin to dihydrotricetin, dihydrokaempferol to dihydromyricetin and kaempferol to myricetin. The chain is Flavonoid 3',5'-hydroxylase CYP75B138 from Crocosmia x crocosmiiflora (Montbretia).